A 435-amino-acid polypeptide reads, in one-letter code: Methionine aminopeptidase 2 (435 aa).

The disordered stretch occupies residues A57–A77. The segment covering A65–A77 has biased composition (basic residues). H188 contributes to the substrate binding site. The a divalent metal cation site is built by D208, D219, and H288. Residue H296 coordinates substrate. The a divalent metal cation site is built by E321 and E416.

This sequence belongs to the peptidase M24A family. Methionine aminopeptidase eukaryotic type 2 subfamily. The cofactor is Co(2+). Zn(2+) is required as a cofactor. It depends on Mn(2+) as a cofactor. Requires Fe(2+) as cofactor.

It localises to the cytoplasm. It carries out the reaction Release of N-terminal amino acids, preferentially methionine, from peptides and arylamides.. Functionally, cotranslationally removes the N-terminal methionine from nascent proteins. The N-terminal methionine is often cleaved when the second residue in the primary sequence is small and uncharged (Met-Ala-, Cys, Gly, Pro, Ser, Thr, or Val). The chain is Methionine aminopeptidase 2 from Clavispora lusitaniae (strain ATCC 42720) (Yeast).